Consider the following 171-residue polypeptide: Probable deoxyuridine 5'-triphosphate nucleotidohydrolase (171 aa).

Belongs to the dCTP deaminase family. Archaeal dUTPase subfamily.

It carries out the reaction dUTP + H2O = dUMP + diphosphate + H(+). Its pathway is pyrimidine metabolism; dUMP biosynthesis; dUMP from dCTP (dUTP route): step 2/2. In terms of biological role, this enzyme is involved in nucleotide metabolism: it produces dUMP, the immediate precursor of thymidine nucleotides and it decreases the intracellular concentration of dUTP so that uracil cannot be incorporated into DNA. The chain is Probable deoxyuridine 5'-triphosphate nucleotidohydrolase from Methanosarcina barkeri (strain Fusaro / DSM 804).